We begin with the raw amino-acid sequence, 382 residues long: 6-hydroxynicotinate 3-monooxygenase (382 aa).

Positions 1–25 (MRGRQKIAIVGAGLGGAAAATLLQQ) are cleaved as a signal peptide. Residues Gly-15, 34 to 35 (EQ), His-47, Arg-108, and Leu-130 each bind FAD. The active-site Proton acceptor is His-47. The active-site Proton acceptor is the Tyr-215. FAD is bound by residues Asp-294 and 307–308 (AC).

The protein belongs to the 6-hydroxynicotinate 3-monooxygenase family. As to quaternary structure, monomer. Requires FAD as cofactor.

The catalysed reaction is 6-hydroxynicotinate + NADH + O2 + 2 H(+) = 2,5-dihydroxypyridine + CO2 + NAD(+) + H2O. The protein operates within cofactor degradation; nicotinate degradation. Its function is as follows. Flavin-dependent monooxygenase (FMO) that catalyzes the decarboxylative hydroxylation of 6-hydroxynicotinic acid (6-HNA) to 2,5-dihydroxypyridine (2,5-DHP) with concomitant oxidation of NADH, a step in the aerobic nicotinate degradation pathway. In Pseudomonas putida (strain ATCC 47054 / DSM 6125 / CFBP 8728 / NCIMB 11950 / KT2440), this protein is 6-hydroxynicotinate 3-monooxygenase.